The primary structure comprises 128 residues: MKILGIGVDIVENIRIHKSLKNVNFIKRVFSSSEILLAKKITNKKSFYSKRFAAKEAFSKAIGTGFRENLNFKDITVINDKLGKPSFVVTDKIKKIVKKRFKISSFNFFLSISDEKKYSVAYVILQKK.

Asp9 and Glu56 together coordinate Mg(2+).

The protein belongs to the P-Pant transferase superfamily. AcpS family. It depends on Mg(2+) as a cofactor.

It localises to the cytoplasm. It carries out the reaction apo-[ACP] + CoA = holo-[ACP] + adenosine 3',5'-bisphosphate + H(+). Transfers the 4'-phosphopantetheine moiety from coenzyme A to a Ser of acyl-carrier-protein. The protein is Holo-[acyl-carrier-protein] synthase of Pelagibacter ubique (strain HTCC1062).